The sequence spans 305 residues: Olfactory receptor 4X1 (305 aa).

Residues 1-23 (MVATNNVTEIIFVGFSQNWSEQR) are Extracellular-facing. N-linked (GlcNAc...) asparagine glycosylation is found at N6 and N18. A helical membrane pass occupies residues 24-47 (VISVMFLLMYTAVVLGNGLIVVTI). Residues 48 to 55 (LASKVLTS) are Cytoplasmic-facing. Residues 56-77 (PMYFFLSYLSFVEICYCSVMAP) traverse the membrane as a helical segment. At 78–98 (KLIFDSFIKRKVISLKGCLTQ) the chain is on the extracellular side. A disulfide bond links C95 and C187. A helical transmembrane segment spans residues 99-118 (MFSLHFFGGTEAFLLMVMAY). At 119–137 (DRYVAICKPLHYMAIMNQR) the chain is on the cytoplasmic side. Residues 138 to 156 (MCGLLVRIAWGGGLLHSVG) traverse the membrane as a helical segment. At 157-193 (QTFLIFQLPFCGPNIMDHYFCDVHPVLELACADTFFI) the chain is on the extracellular side. Residues 194-217 (SLLIITNGGSISVVSFFVLMASYL) form a helical membrane-spanning segment. The Cytoplasmic portion of the chain corresponds to 218-233 (IILHFLRSHNLEGQHK). Residues 234 to 256 (ALSTCASHVTVVDLFFIPCSLVY) traverse the membrane as a helical segment. The Extracellular segment spans residues 257 to 267 (IRPCVTLPADK). The helical transmembrane segment at 268–287 (IVAVFYTVVTPLLNPVIYSF) threads the bilayer. The Cytoplasmic segment spans residues 288 to 305 (RNAEVKNAMRRFIGGKVI).

The protein belongs to the G-protein coupled receptor 1 family.

It is found in the cell membrane. Functionally, odorant receptor. This chain is Olfactory receptor 4X1 (OR4X1), found in Homo sapiens (Human).